The chain runs to 245 residues: 2,3-bisphosphoglycerate-dependent phosphoglycerate mutase (245 aa).

Residues 8-15 (RHGQSLWN), 21-22 (TG), Arg60, 87-90 (ERHY), Lys98, 114-115 (RR), and 183-184 (GN) contribute to the substrate site. His9 functions as the Tele-phosphohistidine intermediate in the catalytic mechanism. The active-site Proton donor/acceptor is Glu87.

It belongs to the phosphoglycerate mutase family. BPG-dependent PGAM subfamily.

The catalysed reaction is (2R)-2-phosphoglycerate = (2R)-3-phosphoglycerate. It functions in the pathway carbohydrate degradation; glycolysis; pyruvate from D-glyceraldehyde 3-phosphate: step 3/5. Functionally, catalyzes the interconversion of 2-phosphoglycerate and 3-phosphoglycerate. In Bacillus thuringiensis (strain Al Hakam), this protein is 2,3-bisphosphoglycerate-dependent phosphoglycerate mutase.